Here is a 419-residue protein sequence, read N- to C-terminus: L-rhamnose isomerase (419 aa).

Mn(2+)-binding residues include histidine 262, aspartate 294, and aspartate 296.

This sequence belongs to the rhamnose isomerase family. As to quaternary structure, homotetramer. It depends on Mn(2+) as a cofactor.

The protein localises to the cytoplasm. The enzyme catalyses L-rhamnopyranose = L-rhamnulose. Its pathway is carbohydrate degradation; L-rhamnose degradation; glycerone phosphate from L-rhamnose: step 1/3. Its function is as follows. Catalyzes the interconversion of L-rhamnose and L-rhamnulose. This chain is L-rhamnose isomerase, found in Klebsiella pneumoniae subsp. pneumoniae (strain ATCC 700721 / MGH 78578).